The following is a 643-amino-acid chain: E3 ubiquitin-protein ligase AMFR (643 aa).

The next 6 membrane-spanning stretches (helical) occupy residues 82–102 (LFVW…AKLI), 122–142 (FWNF…VQTV), 186–206 (VLSL…VCCV), 215–235 (TLAF…HVIL), 254–274 (GTYV…LDLM), and 276–296 (HIHM…VIFM). The segment at 341 to 379 (CAICWDSMQAARKLPCGHLFHNSCLRSWLEQDTSCPTCR) adopts an RING-type zinc-finger fold. The helical transmembrane segment at 429-449 (IASWLPSFSVEVMHTTNILGI) threads the bilayer. The CUE domain occupies 456–498 (QLNAMAHQIQEMFPQVPYHLVLQDLQMTRSVEITTDNILEGRI). The interval 504–535 (TQRSDSLRPALNSPVERPSPDLEEGEASVQTE) is disordered. Ser-516 and Ser-542 each carry phosphoserine. The disordered stretch occupies residues 598–624 (LNKSSEDDGASERLLPSEGTSSDPVTL). The segment at 622-640 (VTLRRRMLAAAAERRLQRQ) is VCP/p97-interacting motif (VIM).

Interacts with RNF5. Also forms an ERAD complex containing VCP/p97, NGLY1; PSMC1; SAKS1 and RAD23B required for coupling retrotranslocation, ubiquitination and deglycosylation. Interacts with DERL1. Interacts (through a region distinct from the RING finger) with UBE2G2/UBC7. Component of the VCP/p97-AMFR/gp78 complex that enhances VCP/p97 binding to polyubiquitinated proteins for their degradation by the endoplasmic reticulum-associated degradation (ERAD) pathway. Interacts (via the VIM) with VCP/p97. Interacts (via its membrane domain) with INSIG1; the interaction initiates the sterol-mediated ubiquitination and degradation of HMGCR by the ERAD pathway. Interacts with AUP1, UBE2G2 and RNF139/TRC8; interaction with AUP1 facilitates interaction of AMFR with ubiquitin-conjugating enzyme UBE2G2 and ubiquitin ligase RNF139, leading to sterol-induced ubiquitination of HNGCR and its subsequent proteasomal degradation. Interacts with BAG6. Interacts with USP13 (via UBA 2 domain); the interaction is direct. Interacts with LMBR1L, UBAC2 and CTNNB1. Interacts with C18orf32. Post-translationally, palmitoylation of the RING-type zing finger by ZDHHC6 promotes localization to the peripheral endoplasmic reticulum. As to expression, expressed in heart, brain, liver, lung, skeletal muscle, kidney and testis. Not detected in spleen.

The protein localises to the endoplasmic reticulum membrane. It carries out the reaction [E2 ubiquitin-conjugating enzyme]-S-ubiquitinyl-L-cysteine + [acceptor protein]-L-cysteine = [E2 ubiquitin-conjugating enzyme]-L-cysteine + [acceptor protein]-S-ubiquitinyl-L-cysteine.. Its pathway is protein modification; protein ubiquitination. In terms of biological role, E3 ubiquitin-protein ligase that mediates the polyubiquitination of lysine and cysteine residues on target proteins, such as CD3D, CYP3A4, CFTR, INSIG1, SOAT2/ACAT2 and APOB for proteasomal degradation. Component of a VCP/p97-AMFR/gp78 complex that participates in the final step of endoplasmic reticulum-associated degradation (ERAD). The VCP/p97-AMFR/gp78 complex is involved in the sterol-accelerated ERAD degradation of HMGCR through binding to the HMGCR-INSIG1 complex at the ER membrane. In addition, interaction of AMFR with AUP1 facilitates interaction of AMFR with ubiquitin-conjugating enzyme UBE2G2 and ubiquitin ligase RNF139, leading to sterol-induced HMGCR ubiquitination. The ubiquitinated HMGCR is then released from the ER by the complex into the cytosol for subsequent destruction. In addition to ubiquitination on lysine residues, catalyzes ubiquitination on cysteine residues: together with INSIG1, mediates polyubiquitination of SOAT2/ACAT2 at 'Cys-277', leading to its degradation when the lipid levels are low. Catalyzes ubiquitination and subsequent degradation of INSIG1 when cells are depleted of sterols. Mediates polyubiquitination of INSIG2 at 'Cys-215' in some tissues, leading to its degradation. Also regulates ERAD through the ubiquitination of UBL4A a component of the BAG6/BAT3 complex. Also acts as a scaffold protein to assemble a complex that couples ubiquitination, retranslocation and deglycosylation. Mediates tumor invasion and metastasis as a receptor for the GPI/autocrine motility factor. In association with LMBR1L and UBAC2, negatively regulates the canonical Wnt signaling pathway in the lymphocytes by promoting the ubiquitin-mediated degradation of CTNNB1 and Wnt receptors FZD6 and LRP6. Regulates NF-kappa-B and MAPK signaling pathways by mediating 'Lys-27'-linked polyubiquitination of TAB3 and promoting subsequent TAK1/MAP3K7 activation. The protein is E3 ubiquitin-protein ligase AMFR (Amfr) of Mus musculus (Mouse).